Here is a 92-residue protein sequence, read N- to C-terminus: Small ribosomal subunit protein uS19 (92 aa).

The protein belongs to the universal ribosomal protein uS19 family.

Functionally, protein S19 forms a complex with S13 that binds strongly to the 16S ribosomal RNA. This Rippkaea orientalis (strain PCC 8801 / RF-1) (Cyanothece sp. (strain PCC 8801)) protein is Small ribosomal subunit protein uS19.